The primary structure comprises 928 residues: Neuropilin-1 (928 aa).

The first 21 residues, 1–21 (MLLRLLSCCCWLLCSLRSSWA), serve as a signal peptide directing secretion. Over 22 to 860 (SRNDKCGDTI…PGNVLKTLDP (839 aa)) the chain is Extracellular. Intrachain disulfides connect cysteine 27–cysteine 54, cysteine 82–cysteine 104, and cysteine 147–cysteine 173. CUB domains follow at residues 27–141 (CGDT…YEVF) and 147–265 (CSRN…FSVV). N-linked (GlcNAc...) asparagine glycosylation is present at asparagine 150. Residues glutamate 195, aspartate 209, and aspartate 250 each coordinate Ca(2+). A disulfide bridge links cysteine 206 with cysteine 228. N-linked (GlcNAc...) asparagine glycosylation is found at asparagine 261, asparagine 300, and asparagine 523. Intrachain disulfides connect cysteine 275–cysteine 424 and cysteine 431–cysteine 584. F5/8 type C domains follow at residues 275-424 (CKEA…LYGC) and 431-584 (CSRM…LLGC). The O-linked (Xyl...) (chondroitin sulfate) serine; alternate glycan is linked to serine 613. Serine 613 is a glycosylation site (O-linked (Xyl...) (heparan sulfate) serine; alternate). Residues 624-645 (GATGQSTETPTVEASPEEPDMT) form a disordered region. A compositionally biased stretch (polar residues) spans 625–635 (ATGQSTETPTV). The region spanning 646–812 (HSDLDCKFGW…NHISPSQCRA (167 aa)) is the MAM domain. O-linked (Xyl...) (chondroitin sulfate) serine glycosylation occurs at serine 834. Asparagine 844 is a glycosylation site (N-linked (GlcNAc...) asparagine). A helical transmembrane segment spans residues 861-883 (ILITIIAMSALGVLLGAICGVVL). Residues 884–928 (YCACWHNGMSERNLSALENYNFELVDGVKLKKDKLNTQNSYSEAS) lie on the Cytoplasmic side of the membrane.

Belongs to the neuropilin family. In terms of assembly, homodimer, and heterodimer. As to expression, retinal ganglion cells and visual center neurons.

It localises to the mitochondrion membrane. The protein resides in the cell membrane. In terms of biological role, receptor involved in the development of the cardiovascular system, in angiogenesis, in the formation of certain neuronal circuits and in organogenesis outside the nervous system. Mediates the chemorepulsant activity of semaphorins. Binding to VEGFA initiates a signaling pathway needed for motor neuron axon guidance and cell body migration, including for the caudal migration of facial motor neurons from rhombomere 4 to rhombomere 6 during embryonic development. Regulates mitochondrial iron transport via interaction. The polypeptide is Neuropilin-1 (nrp1) (Xenopus laevis (African clawed frog)).